A 253-amino-acid chain; its full sequence is Flap endonuclease Xni (253 aa).

D105 contacts Mg(2+). A 5'-3' exonuclease domain is found at 162–251 (ERHQLLDYIA…HLKLSDLRVN (90 aa)). Residues L172, P181, I183, and I186 each contribute to the K(+) site. The interval 185–190 (GIGPKS) is interaction with DNA.

Belongs to the Xni family. Mg(2+) serves as cofactor. K(+) is required as a cofactor.

Has flap endonuclease activity. During DNA replication, flap endonucleases cleave the 5'-overhanging flap structure that is generated by displacement synthesis when DNA polymerase encounters the 5'-end of a downstream Okazaki fragment. The polypeptide is Flap endonuclease Xni (Shewanella amazonensis (strain ATCC BAA-1098 / SB2B)).